Reading from the N-terminus, the 413-residue chain is Arginine biosynthesis bifunctional protein ArgJ (413 aa).

Residues T160, K186, T197, E284, N408, and S413 each coordinate substrate. Residue T197 is the Nucleophile of the active site.

The protein belongs to the ArgJ family. As to quaternary structure, heterotetramer of two alpha and two beta chains.

It localises to the cytoplasm. It carries out the reaction N(2)-acetyl-L-ornithine + L-glutamate = N-acetyl-L-glutamate + L-ornithine. It catalyses the reaction L-glutamate + acetyl-CoA = N-acetyl-L-glutamate + CoA + H(+). The protein operates within amino-acid biosynthesis; L-arginine biosynthesis; L-ornithine and N-acetyl-L-glutamate from L-glutamate and N(2)-acetyl-L-ornithine (cyclic): step 1/1. It participates in amino-acid biosynthesis; L-arginine biosynthesis; N(2)-acetyl-L-ornithine from L-glutamate: step 1/4. Functionally, catalyzes two activities which are involved in the cyclic version of arginine biosynthesis: the synthesis of N-acetylglutamate from glutamate and acetyl-CoA as the acetyl donor, and of ornithine by transacetylation between N(2)-acetylornithine and glutamate. In Burkholderia pseudomallei (strain K96243), this protein is Arginine biosynthesis bifunctional protein ArgJ.